A 669-amino-acid chain; its full sequence is MLRTRLSVSVAARSQLTRSLTASRTAPLRRWPIQQSRLYSSNTRSHKATTTRENTFQKPYSDEEVTKTPVGSRARKIFEAPHPHATRLTVEGAIECPLESFQLLNSPLFNKGSAFTQEEREAFNLEALLPPQVNTLDEQLERSYKQLCYLKTPLAKNDFMTSLRVQNKVLYFALIRRHIKELVPIIYTPTEGDAIAAYSHRFRKPEGVFLDITEPDSIECRLATYGGDKDVDYIVVSDSEGILGIGDQGIGGVRIAISKLALMTLCGGIHPGRVLPVCLDVGTNNKKLARDELYMGNKFSRIRGKQYDDFLEKFIKAVKKVYPSAVLHFEDFGVKNARRLLEKYRYELPSFNDDIQGTGAVVMASLIAALKHTNRDLKDTRVLIYGAGSAGLGIADQIVNHMVTHGVDKEEARKKIFLMDRRGLILQSYEANSTPAQHVYAKSDAEWAGINTRSLHDVVENVKPTCLVGCSTQAGAFTQDVVEEMHKHNPRPIIFPLSNPTRLHEAVPADLMKWTNNNALVATGSPFPPVDGYRISENNNCYSFPGIGLGAVLSRATTITDKMISAAVDQLAELSPLREGDSRPGLLPGLDTITNTSARLATAVILQALEEGTARIEQEQVPGGAPGETVKVPRDFDECLQWVKAQMWEPVYRPMIKVQHDPSVHTNQL.

Polar residues predominate over residues Ile-33–Thr-43. The interval Ile-33–Thr-68 is disordered. Residue Arg-142 participates in fumarate binding. Residue Tyr-187 is the Proton donor of the active site. Lys-259 (proton acceptor) is an active-site residue. 3 residues coordinate a divalent metal cation: Glu-330, Asp-331, and Asp-354. NAD(+) contacts are provided by Ala-387 and Ala-390. 2 residues coordinate (S)-malate: Asn-499 and Asn-539.

The protein belongs to the malic enzymes family. It depends on Mg(2+) as a cofactor. Requires Mn(2+) as cofactor.

Its subcellular location is the mitochondrion matrix. The enzyme catalyses (S)-malate + NAD(+) = pyruvate + CO2 + NADH. It catalyses the reaction oxaloacetate + H(+) = pyruvate + CO2. NAD-dependent mitochondrial malic enzyme that catalyzes the oxidative decarboxylation of malate to pyruvate. This chain is NAD-dependent malic enzyme, mitochondrial (MAE1), found in Saccharomyces cerevisiae (strain ATCC 204508 / S288c) (Baker's yeast).